Reading from the N-terminus, the 170-residue chain is Peptide methionine sulfoxide reductase MsrA (170 aa).

Cysteine 13 is an active-site residue.

Belongs to the MsrA Met sulfoxide reductase family.

It catalyses the reaction L-methionyl-[protein] + [thioredoxin]-disulfide + H2O = L-methionyl-(S)-S-oxide-[protein] + [thioredoxin]-dithiol. The enzyme catalyses [thioredoxin]-disulfide + L-methionine + H2O = L-methionine (S)-S-oxide + [thioredoxin]-dithiol. In terms of biological role, has an important function as a repair enzyme for proteins that have been inactivated by oxidation. Catalyzes the reversible oxidation-reduction of methionine sulfoxide in proteins to methionine. The chain is Peptide methionine sulfoxide reductase MsrA from Nocardia farcinica (strain IFM 10152).